We begin with the raw amino-acid sequence, 303 residues long: Protein REVEILLE 5 (303 aa).

The HTH myb-type domain occupies 54 to 108 (TIKKSRENWTDQEHDKFLEALHLFDRDWKKIEAFVGSKTVVQIRSHAQKYFLKVQ). The segment at residues 81-104 (WKKIEAFVGSKTVVQIRSHAQKYF) is a DNA-binding region (H-T-H motif). Residues 109-130 (KSGANEHLPPPRPKRKASHPYP) form a disordered region.

It is found in the nucleus. In terms of biological role, probable transcription factor. This Arabidopsis thaliana (Mouse-ear cress) protein is Protein REVEILLE 5 (RVE5).